We begin with the raw amino-acid sequence, 175 residues long: Protein GrpE (175 aa).

The disordered stretch occupies residues 1–35; the sequence is MSEQKQEIENENAQNSENLQDDLQDNEKNETNELQ. Basic and acidic residues predominate over residues 25 to 35; sequence DNEKNETNELQ.

Belongs to the GrpE family. Homodimer.

The protein localises to the cytoplasm. Participates actively in the response to hyperosmotic and heat shock by preventing the aggregation of stress-denatured proteins, in association with DnaK and GrpE. It is the nucleotide exchange factor for DnaK and may function as a thermosensor. Unfolded proteins bind initially to DnaJ; upon interaction with the DnaJ-bound protein, DnaK hydrolyzes its bound ATP, resulting in the formation of a stable complex. GrpE releases ADP from DnaK; ATP binding to DnaK triggers the release of the substrate protein, thus completing the reaction cycle. Several rounds of ATP-dependent interactions between DnaJ, DnaK and GrpE are required for fully efficient folding. The chain is Protein GrpE from Campylobacter jejuni (strain RM1221).